Reading from the N-terminus, the 213-residue chain is Golgi apparatus membrane protein TVP23 homolog A (213 aa).

Transmembrane regions (helical) follow at residues 32–52, 54–74, 123–143, and 150–170; these read PLAT…YVSC, WFSK…SLDF, IFWL…FSTL, and WLAL…GYIL.

Belongs to the TVP23 family.

It localises to the membrane. This chain is Golgi apparatus membrane protein TVP23 homolog A (TVP23A), found in Homo sapiens (Human).